A 477-amino-acid polypeptide reads, in one-letter code: Proline--tRNA ligase (477 aa).

Belongs to the class-II aminoacyl-tRNA synthetase family. ProS type 3 subfamily. In terms of assembly, homodimer.

The protein localises to the cytoplasm. It catalyses the reaction tRNA(Pro) + L-proline + ATP = L-prolyl-tRNA(Pro) + AMP + diphosphate. Catalyzes the attachment of proline to tRNA(Pro) in a two-step reaction: proline is first activated by ATP to form Pro-AMP and then transferred to the acceptor end of tRNA(Pro). The polypeptide is Proline--tRNA ligase (Methanoculleus marisnigri (strain ATCC 35101 / DSM 1498 / JR1)).